The following is a 284-amino-acid chain: Bifunctional protein FolD (284 aa).

NADP(+) contacts are provided by residues 166–168 (GAS) and I232.

Belongs to the tetrahydrofolate dehydrogenase/cyclohydrolase family. As to quaternary structure, homodimer.

The catalysed reaction is (6R)-5,10-methylene-5,6,7,8-tetrahydrofolate + NADP(+) = (6R)-5,10-methenyltetrahydrofolate + NADPH. The enzyme catalyses (6R)-5,10-methenyltetrahydrofolate + H2O = (6R)-10-formyltetrahydrofolate + H(+). Its pathway is one-carbon metabolism; tetrahydrofolate interconversion. Its function is as follows. Catalyzes the oxidation of 5,10-methylenetetrahydrofolate to 5,10-methenyltetrahydrofolate and then the hydrolysis of 5,10-methenyltetrahydrofolate to 10-formyltetrahydrofolate. The sequence is that of Bifunctional protein FolD from Shewanella sediminis (strain HAW-EB3).